The sequence spans 475 residues: Ribulose bisphosphate carboxylase large chain (475 aa).

The propeptide occupies 1–2; sequence MS. At P3 the chain carries N-acetylproline. The residue at position 14 (K14) is an N6,N6,N6-trimethyllysine. Substrate-binding residues include N123 and T173. K175 functions as the Proton acceptor in the catalytic mechanism. K177 lines the substrate pocket. Residues K201, D203, and E204 each contribute to the Mg(2+) site. Residue K201 is modified to N6-carboxylysine. H294 serves as the catalytic Proton acceptor. Residues R295, H327, and S379 each contribute to the substrate site.

This sequence belongs to the RuBisCO large chain family. Type I subfamily. In terms of assembly, heterohexadecamer of 8 large chains and 8 small chains; disulfide-linked. The disulfide link is formed within the large subunit homodimers. Requires Mg(2+) as cofactor. In terms of processing, the disulfide bond which can form in the large chain dimeric partners within the hexadecamer appears to be associated with oxidative stress and protein turnover.

The protein resides in the plastid. The protein localises to the chloroplast. The enzyme catalyses 2 (2R)-3-phosphoglycerate + 2 H(+) = D-ribulose 1,5-bisphosphate + CO2 + H2O. It catalyses the reaction D-ribulose 1,5-bisphosphate + O2 = 2-phosphoglycolate + (2R)-3-phosphoglycerate + 2 H(+). RuBisCO catalyzes two reactions: the carboxylation of D-ribulose 1,5-bisphosphate, the primary event in carbon dioxide fixation, as well as the oxidative fragmentation of the pentose substrate in the photorespiration process. Both reactions occur simultaneously and in competition at the same active site. In Populus trichocarpa (Western balsam poplar), this protein is Ribulose bisphosphate carboxylase large chain.